The sequence spans 173 residues: Photosystem I assembly protein Ycf3 (173 aa).

3 TPR repeats span residues 35–68, 72–105, and 120–153; these read AYIY…EENA, GETL…NPKQ, and GRAL…YPGG.

It belongs to the Ycf3 family.

It is found in the cellular thylakoid membrane. Essential for the assembly of the photosystem I (PSI) complex. May act as a chaperone-like factor to guide the assembly of the PSI subunits. The protein is Photosystem I assembly protein Ycf3 of Prochlorococcus marinus (strain SARG / CCMP1375 / SS120).